The sequence spans 874 residues: DNA primase (874 aa).

The CHC2-type zinc-finger motif lies at 786–824 (CLRHTHRASSKNVRVFLVLYYTSQAITVTFMSQCFAGRC). Positions 848–857 (ASQDSTTSQL) are enriched in polar residues. Positions 848–874 (ASQDSTTSQLARRRDRQDGSFSETLPN) are disordered.

This sequence belongs to the herpesviridae DNA primase family. As to quaternary structure, associates with the helicase and the primase-associated factor to form the helicase-primase factor.

It is found in the host nucleus. Its function is as follows. Essential component of the helicase/primase complex. Unwinds the DNA at the replication forks and generates single-stranded DNA for both leading and lagging strand synthesis. The primase initiates primer synthesis and thereby produces large amount of short RNA primers on the lagging strand that the polymerase elongates using dNTPs. The sequence is that of DNA primase from Epstein-Barr virus (strain B95-8) (HHV-4).